We begin with the raw amino-acid sequence, 165 residues long: Ubiquitin-conjugating enzyme E2 G2 (165 aa).

The residue at position 2 (A2) is an N-acetylalanine. The UBC core domain maps to 4–164 (TALKRLMAEY…AKQIVQKSLG (161 aa)). Catalysis depends on C89, which acts as the Glycyl thioester intermediate.

The protein belongs to the ubiquitin-conjugating enzyme family. As to quaternary structure, interacts with AUP1 (via C-terminus); the interaction recruits UBE2G2 to lipid droplets. Interacts with ubiquitin ligases AMFR/gp78 and RNF139/TRC8; recruitment to lipid droplets by AUP1 facilitates interaction of UBE2G2 with AMFR and RNF139, leading to sterol-induced ubiquitination of 3-hydroxy-3-methylglutaryl coenzyme A reductase and its subsequent proteasomal degradation.

The protein localises to the endoplasmic reticulum. It localises to the lipid droplet. The catalysed reaction is S-ubiquitinyl-[E1 ubiquitin-activating enzyme]-L-cysteine + [E2 ubiquitin-conjugating enzyme]-L-cysteine = [E1 ubiquitin-activating enzyme]-L-cysteine + S-ubiquitinyl-[E2 ubiquitin-conjugating enzyme]-L-cysteine.. It functions in the pathway protein modification; protein ubiquitination. Accepts ubiquitin from the E1 complex and catalyzes its covalent attachment to other proteins. In vitro catalyzes 'Lys-48'-linked polyubiquitination. Involved in endoplasmic reticulum-associated degradation (ERAD). Required for sterol-induced ubiquitination of 3-hydroxy-3-methylglutaryl coenzyme A reductase and its subsequent proteasomal degradation. This is Ubiquitin-conjugating enzyme E2 G2 from Bos taurus (Bovine).